A 101-amino-acid chain; its full sequence is Phosphoprotein OPG062 (101 aa).

The interval Pro-51–Arg-73 is disordered. Phosphoserine is present on residues Ser-53 and Ser-62. Residues Cys-56 to Asn-70 are compositionally biased toward basic and acidic residues.

It belongs to the orthopoxvirus OPG062 family. Self-associates to form high molecular-weight forms. Interacts with protein OPG157/A30. Interacts with host RICTOR and RPTOR; these interactions disrupt the mTORC1 and mTORC2 crosstalk. Post-translationally, phosphorylated on two serines. While these phosphorylations do not play a role in virion assembly; they are essential for the interaction with host RICTOR and RPTOR.

Its subcellular location is the virion. Functionally, plays an essential role in virion assembly and morphogenesis. Also plays a role in the inhibition of host immune response by dysregulating mTOR. Sequesters host RICTOR and RPTOR, thereby disrupting mTORC1 and mTORC2 crosstalk. In turn, blocks the host antiviral response in part through mTOR-dependent degradation of cGAS, the primary poxvirus sensor. The protein is Phosphoprotein OPG062 (OPG062) of Vaccinia virus (strain Western Reserve) (VACV).